We begin with the raw amino-acid sequence, 32 residues long: U3-ctenitoxin-Pk1a (32 aa).

Cystine bridges form between cysteine 3–cysteine 17, cysteine 10–cysteine 21, and cysteine 16–cysteine 30.

The protein belongs to the neurotoxin 17 (21C2) family. Expressed by the venom gland.

The protein resides in the secreted. Functionally, may act as a neurotoxin. The chain is U3-ctenitoxin-Pk1a from Phoneutria keyserlingi (Brazilian wandering spider).